The sequence spans 232 residues: uncharacterized protein (232 aa).

Positions 119–145 are disordered; the sequence is DEEYRENSKAPEAKARPSFVGEGRRLG. A compositionally biased stretch (basic and acidic residues) spans 123 to 133; that stretch reads RENSKAPEAKA.

This is an uncharacterized protein from Encephalitozoon cuniculi (strain GB-M1) (Microsporidian parasite).